Consider the following 30-residue polypeptide: Urease subunit alpha (30 aa).

The protein belongs to the metallo-dependent hydrolases superfamily. Urease alpha subunit family. As to quaternary structure, heterotrimer of UreA (gamma), UreB (beta) and UreC (alpha) subunits. Three heterotrimers associate to form the active enzyme. The cofactor is Ni cation.

The protein resides in the cytoplasm. The enzyme catalyses urea + 2 H2O + H(+) = hydrogencarbonate + 2 NH4(+). It participates in nitrogen metabolism; urea degradation; CO(2) and NH(3) from urea (urease route): step 1/1. The chain is Urease subunit alpha (ureC) from Escherichia coli.